Here is a 121-residue protein sequence, read N- to C-terminus: MIQQETFLTVADNSGAKKLQCIRVLGSNRRYAHVGDVIVAAVKDALPNMGVKKSDVVKAVVVRTKATLRRETGNSIRFDDNAAVLINEDKNPRGTRVFGPVARELRERNFTKIVSLAPEVI.

Belongs to the universal ribosomal protein uL14 family. In terms of assembly, part of the 50S ribosomal subunit. Forms a cluster with proteins L3 and L19. In the 70S ribosome, L14 and L19 interact and together make contacts with the 16S rRNA in bridges B5 and B8.

Its function is as follows. Binds to 23S rRNA. Forms part of two intersubunit bridges in the 70S ribosome. This chain is Large ribosomal subunit protein uL14, found in Prochlorococcus marinus (strain MIT 9211).